A 746-amino-acid chain; its full sequence is MEHIYQYSWMIPFIPLPVPILLGMGLLLFPTATKNLRRMWAFLSIFLLSIVMIFSIDLSIQQITGSSAYQYVWSWTINNEFSFEFGNLIDPLTSIMSILITTVGILVLIYSDSYMSHDQGYLRFFAYMSFFNTSMLGLVTSSNLIQVYIFWELVGMCSYLLIGFWFTRPIAANACQKAFVTNRVGDFGLLLGILGLYWITGSFEFQDLFEIFNNLIYNNQVHFLFVTLCAFLLFAGPVAKSAQFPLHVWLPDAMEGPTPISALIHAATMVAAGIFLVARLLPLFIGIPYIMYLISLIGIITVLLGATLALAQKDIKRGLAYSTMSQLGYMMLALGMGSYRAALFHLITHAYSKALLFLGSGSIIHSMEAVVGYSPVKSQNMVLMGGLTKHVPITKTTFLLGTLSLCGIPPLACFWSKDEILNDSWLYSPIFAVIACSTAGLTAFYMFRIYLLTFDGHLNIHFQNYSGKKSSSFYSISIWGKEEAKPINRNFCLVPLLTMNNNERATFFWKKAYQIGSNVRNRTFLSIPHFAVKTTFSYPHESDNTILFPMLILVLFTLFVGAIGIPFNQEGIDFDILSKLLTPSINLLHQNSNDFVDWYEFFKNATFSVSIAFFGIFIAFFLYKPAYSSLQNLNLLNSFAKRGPKRILWDKIINFIYDWSYNRGYIDTFYTISLTGGIRGLAELTHFFDRRVIDGITNGVGITSFFIGEGIKYVGGSRISSYLLLYLFYVLIFLFIYYFLNLLNFF.

A run of 16 helical transmembrane segments spans residues 9–29 (WMIP…LLLF), 40–60 (WAFL…DLSI), 89–109 (IDPL…LVLI), 125–145 (FAYM…SNLI), 147–167 (VYIF…FWFT), 185–205 (GDFG…SFEF), 219–239 (NQVH…GPVA), 258–278 (TPIS…FLVA), 280–300 (LLPL…IGII), 327–347 (LGYM…FHLI), 354–374 (ALLF…VGYS), 396–416 (TTFL…CFWS), 425–445 (WLYS…TAFY), 546–566 (ILFP…IGIP), 607–627 (FSVS…KPAY), and 723–743 (LLLY…LNLL).

Belongs to the complex I subunit 5 family. As to quaternary structure, NDH is composed of at least 16 different subunits, 5 of which are encoded in the nucleus.

The protein localises to the plastid. It localises to the chloroplast thylakoid membrane. The catalysed reaction is a plastoquinone + NADH + (n+1) H(+)(in) = a plastoquinol + NAD(+) + n H(+)(out). It carries out the reaction a plastoquinone + NADPH + (n+1) H(+)(in) = a plastoquinol + NADP(+) + n H(+)(out). In terms of biological role, NDH shuttles electrons from NAD(P)H:plastoquinone, via FMN and iron-sulfur (Fe-S) centers, to quinones in the photosynthetic chain and possibly in a chloroplast respiratory chain. The immediate electron acceptor for the enzyme in this species is believed to be plastoquinone. Couples the redox reaction to proton translocation, and thus conserves the redox energy in a proton gradient. This is NAD(P)H-quinone oxidoreductase subunit 5, chloroplastic (ndhF) from Carica papaya (Papaya).